A 403-amino-acid polypeptide reads, in one-letter code: Phosphopentomutase (403 aa).

Residues aspartate 13, aspartate 298, histidine 303, aspartate 339, histidine 340, and histidine 351 each contribute to the Mn(2+) site.

Belongs to the phosphopentomutase family. The cofactor is Mn(2+).

It localises to the cytoplasm. The enzyme catalyses 2-deoxy-alpha-D-ribose 1-phosphate = 2-deoxy-D-ribose 5-phosphate. It catalyses the reaction alpha-D-ribose 1-phosphate = D-ribose 5-phosphate. It functions in the pathway carbohydrate degradation; 2-deoxy-D-ribose 1-phosphate degradation; D-glyceraldehyde 3-phosphate and acetaldehyde from 2-deoxy-alpha-D-ribose 1-phosphate: step 1/2. In terms of biological role, isomerase that catalyzes the conversion of deoxy-ribose 1-phosphate (dRib-1-P) and ribose 1-phosphate (Rib-1-P) to deoxy-ribose 5-phosphate (dRib-5-P) and ribose 5-phosphate (Rib-5-P), respectively. The protein is Phosphopentomutase of Streptococcus pyogenes serotype M12 (strain MGAS2096).